Here is a 143-residue protein sequence, read N- to C-terminus: MFMGEYSHTMDAKGRVFIPARFREELGEKFIVTKGLDHCLFVFPQKEWKVIEEKIKALPFTNQDARAFVRLFFAGAAECEQDKQGRVLLPNHLREYAKLDKEVVIVGVGTRVEIWSQELWNNYCNGAQAAYEEIAEKMVDFLL.

2 consecutive SpoVT-AbrB domains span residues 5 to 47 (EYSH…PQKE) and 76 to 119 (AAEC…SQEL).

Belongs to the MraZ family. Forms oligomers.

Its subcellular location is the cytoplasm. It localises to the nucleoid. The chain is Transcriptional regulator MraZ from Carboxydothermus hydrogenoformans (strain ATCC BAA-161 / DSM 6008 / Z-2901).